A 591-amino-acid polypeptide reads, in one-letter code: Metalloendopeptidase OPG085 (591 aa).

Histidine 41 contributes to the Zn(2+) binding site. The active site involves glutamate 44. Residues histidine 45 and glutamate 112 each coordinate Zn(2+).

This sequence belongs to the peptidase M44 family. Zn(2+) is required as a cofactor. Post-translationally, undergoes proteolytic processing during the course of infection. May be cleaved into 46 kDa and 22 kDa products (Potential).

The protein localises to the virion. Functionally, probably involved in maturation of some viral proteins by processing them preferentially at Ala-Gly-|-Ser/Thr/Lys motifs. Does not seem to be responsible for the cleavage of major core proteins. The sequence is that of Metalloendopeptidase OPG085 (OPG085) from Homo sapiens (Human).